Reading from the N-terminus, the 114-residue chain is Large ribosomal subunit protein bL20 (114 aa).

It belongs to the bacterial ribosomal protein bL20 family.

In terms of biological role, binds directly to 23S ribosomal RNA and is necessary for the in vitro assembly process of the 50S ribosomal subunit. It is not involved in the protein synthesizing functions of that subunit. This chain is Large ribosomal subunit protein bL20, found in Anaeromyxobacter sp. (strain Fw109-5).